The chain runs to 229 residues: N-acetyltransferase MPR1 (229 aa).

The region spanning 65-219 (FNLEIESGKT…DAIIYGKDLT (155 aa)) is the N-acetyltransferase domain. Asparagine 135 serves as a coordination point for substrate. 145-150 (RGQKVG) lines the CoA pocket. Residue 172 to 173 (NL) participates in substrate binding.

Belongs to the acetyltransferase family. In terms of assembly, homodimer. Post-translationally, not glycosylated.

The protein resides in the cytoplasm. It localises to the mitochondrion. It catalyses the reaction L-glutamate 5-semialdehyde + acetyl-CoA = N-acetyl-L-glutamate 5-semialdehyde + CoA + H(+). Its function is as follows. N-acetyltransferase involved in oxidative stress resistance. Acetylates the toxic proline metabolism intermediate (S)-1-pyrroline-5-carboxylate (P5C), or more likely its spontaneously forming tautomer glutamate-5-semialdehyde (GSA) into N-acetyl-GSA for arginine synthesis in the mitochondria. P5C has been shown to increase the levels of reactive oxygen species (ROS) in the cell by inhibiting the function of the respiratory chain in the mitochondria. The enzyme is able to reduce intracellular ROS levels under P5C-induced oxidative stress and protects cells from damage by oxidative stress. Also acetylates and thereby detoxifies the proline analog azetidine-2-carboxylate (AZC), however it is unlikely that AZC is a natural substrate as it occurs only in plants belonging to the Lilaceae family. Does not acetylate proline. The sequence is that of N-acetyltransferase MPR1 from Saccharomyces cerevisiae (Baker's yeast).